We begin with the raw amino-acid sequence, 414 residues long: Na(+)-translocating NADH-quinone reductase subunit B (414 aa).

Helical transmembrane passes span 56-76, 129-149, and 164-184; these read IMIM…YNAG, FLPI…LFCM, and ILFA…LGIT. An FMN phosphoryl threonine modification is found at threonine 236. A run of 5 helical transmembrane segments spans residues 268 to 288, 297 to 317, 325 to 345, 358 to 378, and 381 to 401; these read IPGS…AMIV, IIAG…VIGS, MPWH…FMAT, WWYG…NPAY, and GMML…HVVI.

This sequence belongs to the NqrB/RnfD family. As to quaternary structure, composed of six subunits; NqrA, NqrB, NqrC, NqrD, NqrE and NqrF. FMN serves as cofactor.

It is found in the cell inner membrane. The catalysed reaction is a ubiquinone + n Na(+)(in) + NADH + H(+) = a ubiquinol + n Na(+)(out) + NAD(+). This reaction is tightly coupled to the Na(+) pumping activity and specifically requires Na(+) for activity. Inhibited by korormicin and 2-N-heptyl-4-hydroxyquinoline N-oxide (HQNO). Functionally, NQR complex catalyzes the reduction of ubiquinone-1 to ubiquinol by two successive reactions, coupled with the transport of Na(+) ions from the cytoplasm to the periplasm. NqrA to NqrE are probably involved in the second step, the conversion of ubisemiquinone to ubiquinol. This is Na(+)-translocating NADH-quinone reductase subunit B from Vibrio alginolyticus.